The following is a 526-amino-acid chain: Adenylyl cyclase-associated protein (526 aa).

The segment at 1 to 168 is adenyl cyclase-binding; it reads MPDSKYTMQG…RQSKYFAYLS (168 aa). Disordered regions lie at residues 43-72, 255-304, and 326-371; these read EASK…PEVE, QSTK…DANK, and KVDK…RPPR. Polar residues predominate over residues 45-64; the sequence is SKNNKPSDSGADANTTNEPS. Residues 169–369 carry the SH3-binding motif; sequence ALSEGAPLFS…KPSTLKTKRP (201 aa). Over residues 262–274 the composition is skewed to low complexity; sequence ATSSPSPASATAA. The segment covering 275–285 has biased composition (pro residues); the sequence is PAPPPPPPAPP. The segment covering 290-302 has biased composition (polar residues); that stretch reads EISNDTPATSSDA. Residues 326–338 show a composition bias toward basic and acidic residues; it reads KVDKSQQTHKNPE. The span at 342–352 shows a compositional bias: low complexity; sequence SSTVSSTGSKS. Residues 354 to 361 form an interaction with SH3 domain of ABP1 region; that stretch reads PPPRPKKP. Over residues 357 to 370 the composition is skewed to basic residues; it reads RPKKPSTLKTKRPP. One can recognise a C-CAP/cofactor C-like domain in the interval 369–504; that stretch reads PPRKELVGNK…EDDDYVEFPI (136 aa). A dimerization and actin-binding region spans residues 370–526; it reads PRKELVGNKW…FKSAVFEHAG (157 aa). At Ser454 the chain carries Phosphoserine.

Belongs to the CAP family. As to quaternary structure, homodimer.

It is found in the cytoplasm. Its subcellular location is the cytoskeleton. The protein resides in the actin patch. In terms of biological role, the N-terminal domain binds to adenylyl cyclase, thereby enabling adenylyl cyclase to be activated by upstream regulatory signals, such as Ras. The C-terminal domain is required for normal cellular morphology and growth control. This chain is Adenylyl cyclase-associated protein (SRV2), found in Saccharomyces cerevisiae (strain ATCC 204508 / S288c) (Baker's yeast).